The chain runs to 343 residues: Palmitoyltransferase ZDHHC4 (343 aa).

Residues 1–2 (MD) lie on the Lumenal side of the membrane. The helical transmembrane segment at 3 to 23 (FLVLFSFYLAFLLICVIMICI) threads the bilayer. Residues 24–67 (FTKSQRLKAVVLGGAQVCARVTPQCFQRAVQTLLHQLFHTRHPA) are Cytoplasmic-facing. Residues 68-88 (FLALHLLLQGLVYAEYTYEVF) traverse the membrane as a helical segment. Topologically, residues 89-95 (SYCRELE) are lumenal. Residues 96–116 (FSLPCLLLPYVLLSVNLVFFT) traverse the membrane as a helical segment. Over 117 to 193 (LTCSTNPGTI…NCIGAWNTGY (77 aa)) the chain is Cytoplasmic. The DHHC domain maps to 149-199 (SRCSTCDLRKPARSKHCRVCDRCVHRFDHHCVWVNNCIGAWNTGYFLIYLL). C179 functions as the S-palmitoyl cysteine intermediate in the catalytic mechanism. The chain crosses the membrane as a helical span at residues 194-214 (FLIYLLTLTASAATIAILSAA). Topologically, residues 215–255 (FLLRLVAVSNLYQETYLDDLGRFQAVDTGFLIQHLFLAFPR) are lumenal. Residues 256–276 (IIFLLGFVIVLSLLLAGYLCF) form a helical membrane-spanning segment. The Cytoplasmic portion of the chain corresponds to 277–343 (ALYLAATNQT…ATPSYKKKKR (67 aa)). The Di-lysine motif signature appears at 340–343 (KKKR).

This sequence belongs to the DHHC palmitoyltransferase family. As to quaternary structure, interacts with CPT1A.

It is found in the endoplasmic reticulum membrane. The protein localises to the golgi apparatus membrane. It localises to the cell membrane. It carries out the reaction L-cysteinyl-[protein] + hexadecanoyl-CoA = S-hexadecanoyl-L-cysteinyl-[protein] + CoA. Palmitoyltransferase that could catalyze the addition of palmitate onto protein substrates including the D(2) dopamine receptor DRD2, GSK3B or MAVS. Mediates GSK3B palmitoylation to prevent its AKT1-mediated phosphorylation leading to activation of the STAT3 signaling pathway. Also catalyzes MAVS palmitoylation which promotes its stabilization and activation by inhibiting 'Lys-48'- but facilitating 'Lys-63'-linked ubiquitination. The polypeptide is Palmitoyltransferase ZDHHC4 (Rattus norvegicus (Rat)).